A 259-amino-acid polypeptide reads, in one-letter code: Hydroxyacylglutathione hydrolase (259 aa).

Residues H56, H58, D60, H61, H112, D133, and H171 each coordinate Zn(2+).

The protein belongs to the metallo-beta-lactamase superfamily. Glyoxalase II family. In terms of assembly, monomer. Zn(2+) is required as a cofactor.

The enzyme catalyses an S-(2-hydroxyacyl)glutathione + H2O = a 2-hydroxy carboxylate + glutathione + H(+). It participates in secondary metabolite metabolism; methylglyoxal degradation; (R)-lactate from methylglyoxal: step 2/2. Its function is as follows. Thiolesterase that catalyzes the hydrolysis of S-D-lactoyl-glutathione to form glutathione and D-lactic acid. In Pseudomonas putida (strain ATCC 700007 / DSM 6899 / JCM 31910 / BCRC 17059 / LMG 24140 / F1), this protein is Hydroxyacylglutathione hydrolase.